Consider the following 358-residue polypeptide: MASLNDVCYEKIKNNFYYGLFGDFKLVVDKNTECFNATKLCNSGGKRFRDWTKLEKSKKLMEYYKGRRDDHRGGSNFYEVKGDNKDDEVSKTTGQYVKKELILDIASWISTEFYDKCNQIVIDFFVVEFKEKEKELTHQLSIVEENLKKLRIENENNLEEIKLKDTRIDELIYASKRQEQMLLESHNLLKSMGIEVKDIKEQNNELLNEVGELREDNNELQEQVENVQEQIQKVQVKLEISVEDRAPQPDKRGKKERFILLKRNDEHYPYYTIRAQDINAKKAVKRQQGKYEEVLILLDLVCHPNTKTFYVRIKDDLKKKGVKFNLCEIDISKSVITEKDLIEEMERINEEKRTLIIE.

The KilA-N domain maps to 15–124; sequence NFYYGLFGDF…DKCNQIVIDF (110 aa). Positions 126–245 form a coiled coil; that stretch reads VVEFKEKEKE…VKLEISVEDR (120 aa).

Belongs to the IIV-6 006L/238R/313L/468L family.

In Acheta domesticus (House cricket), this protein is Putative KilA-N domain-containing protein 313L.